The primary structure comprises 252 residues: Large ribosomal subunit protein uL29m (252 aa).

K146 is subject to N6-acetyllysine. Basic residues predominate over residues 230–240; that stretch reads KKKEKILHAKF. The segment at 230-252 is disordered; that stretch reads KKKEKILHAKFPHLSQERKSSSV.

This sequence belongs to the universal ribosomal protein uL29 family. Component of the mitochondrial ribosome large subunit (39S) which comprises a 16S rRNA and about 50 distinct proteins.

It is found in the mitochondrion. This Mus musculus (Mouse) protein is Large ribosomal subunit protein uL29m (Mrpl47).